Consider the following 91-residue polypeptide: uncharacterized protein (91 aa).

The N-terminal stretch at 1 to 25 (MLLQRIGIEHLRIWILLLLISLVPA) is a signal peptide.

This is an uncharacterized protein from Caenorhabditis elegans.